A 235-amino-acid polypeptide reads, in one-letter code: 2-C-methyl-D-erythritol 4-phosphate cytidylyltransferase (235 aa).

It belongs to the IspD/TarI cytidylyltransferase family. IspD subfamily.

It carries out the reaction 2-C-methyl-D-erythritol 4-phosphate + CTP + H(+) = 4-CDP-2-C-methyl-D-erythritol + diphosphate. Its pathway is isoprenoid biosynthesis; isopentenyl diphosphate biosynthesis via DXP pathway; isopentenyl diphosphate from 1-deoxy-D-xylulose 5-phosphate: step 2/6. Its function is as follows. Catalyzes the formation of 4-diphosphocytidyl-2-C-methyl-D-erythritol from CTP and 2-C-methyl-D-erythritol 4-phosphate (MEP). The sequence is that of 2-C-methyl-D-erythritol 4-phosphate cytidylyltransferase from Pseudomonas putida (strain ATCC 47054 / DSM 6125 / CFBP 8728 / NCIMB 11950 / KT2440).